An 88-amino-acid chain; its full sequence is MNIFGVGLPEVTVILILALLIFGPKKLPELGKQLGKTLKSLKKASNEFQNEIDQVMNEQDKDESPISIESNQTNEINQEKIDSENSKK.

The chain crosses the membrane as a helical span at residues 3 to 23 (IFGVGLPEVTVILILALLIFG). Positions 56-88 (MNEQDKDESPISIESNQTNEINQEKIDSENSKK) are disordered. Residues 67-76 (SIESNQTNEI) are compositionally biased toward polar residues. The segment covering 77–88 (NQEKIDSENSKK) has biased composition (basic and acidic residues).

It belongs to the TatA/E family. In terms of assembly, forms a complex with TatC.

The protein resides in the cell inner membrane. Part of the twin-arginine translocation (Tat) system that transports large folded proteins containing a characteristic twin-arginine motif in their signal peptide across membranes. TatA could form the protein-conducting channel of the Tat system. The polypeptide is Sec-independent protein translocase protein TatA (Prochlorococcus marinus (strain AS9601)).